The sequence spans 952 residues: MTEAAASDIPPFRYTAALADEIERRWQDIWEREGTFHAPNPTGPLADPEHPRAGAEKLYVLDMFPYPSGAGLHVGHPLGYIGTDCFARYQRMAGRNVLHAMGFDAFGLPAEQYAVQTGTHPRTTTEANIARYKAQLRRLGLAHDERRSVATIDADFYRWTQWVFLQIYNAWYDREAKRARPIAELIAEFSGGVRRTPDGRPWRELTDVERRSVVDEYRLAYVSQAPVNWCPGLGTVLANEEVTADGRSERGNFPVFKRNLKQWMMRITAYGDRLLDDLDKLDWPEPIKLMQRNWIGRSIGAHIEFPTSAGDSSAVGEPRINVFTTRPDTIFGATYLVLAPEHALVDDLVPTAWPSGTRDAWTGGQASPRAAVAGYRKVAAAKTDMERQAETKEKTGVFIGAYATNPVTGAQIPIFIADYVLAGYGTGAIMAVPGQDERDWAFAEVFDLPIVRTVRPAEGFDGKAYTGEGPAINSAAPERGLNLDGLGVAEAKARTTAWLEASGHGSGAVTYRLRDWLFSRQRYWGEPFPIVYDETGAAIALPEDMLPVELPEVDDFSPRTFDPADAGSNPETPLSRRRDWVEVELDLGDGPKRYTRETNVMPQWAGSCWYELRYLDPTNADRFVDPDTERYWMGPRGEGDCGGTDLYVGGAEHAVLHLLYARFWHKVLYDLGHVSSFEPFRKLFNQGYIQAYAYTDARGAYVPAEEVVERSGAYYLGDVEVSREYGKMGKSLRNVVTPDEMCAAYGADTFRVYEMSMGPLEVSRPWETRAVVGSFRFLQRVWRAIVDERSGASRVVDAPADEATRRLLHRIVDGVRGDMEAMRFNTSVAKLIELTNALTRLPATPREVAEPLVLMVAPFAPHVAEELWRRMGHPTSLAYADFPVADPDLLVAESVTYPVQVNGKVRGRVQVPADASEEVVRAAALDAVATALEGREPRKVIVVPGRMVSVVR.

Residues 65 to 76 (PYPSGAGLHVGH) carry the 'HIGH' region motif. Positions 727-731 (KMGKS) match the 'KMSKS' region motif. Lysine 730 serves as a coordination point for ATP.

Belongs to the class-I aminoacyl-tRNA synthetase family.

It localises to the cytoplasm. It catalyses the reaction tRNA(Leu) + L-leucine + ATP = L-leucyl-tRNA(Leu) + AMP + diphosphate. This Salinispora arenicola (strain CNS-205) protein is Leucine--tRNA ligase.